The following is a 629-amino-acid chain: tRNA uridine 5-carboxymethylaminomethyl modification enzyme MnmG (629 aa).

FAD-binding positions include glycine 13–glycine 18, valine 125, and serine 180. Glycine 273–phenylalanine 287 is a binding site for NAD(+). An FAD-binding site is contributed by glutamine 370.

Belongs to the MnmG family. Homodimer. Heterotetramer of two MnmE and two MnmG subunits. Requires FAD as cofactor.

It is found in the cytoplasm. Its function is as follows. NAD-binding protein involved in the addition of a carboxymethylaminomethyl (cmnm) group at the wobble position (U34) of certain tRNAs, forming tRNA-cmnm(5)s(2)U34. In Escherichia coli (strain SMS-3-5 / SECEC), this protein is tRNA uridine 5-carboxymethylaminomethyl modification enzyme MnmG.